The sequence spans 1006 residues: UPF0182 protein Arth_2749 (1006 aa).

The next 7 membrane-spanning stretches (helical) occupy residues 18 to 38 (GALTPTLIVVALVVVGFIFFA), 64 to 84 (IIIFLAGFALMFVAMFYAIRI), 115 to 135 (VVMIGLPVLFGLFAGSAAASQ), 168 to 188 (FLGFVTGFLISVVVVAGIAGI), 211 to 231 (QIHLAVTGAVFLLLLGVNFWL), 260 to 280 (SILAVAAALVAILFIVAAVIG), and 287 to 307 (IGTAMLVITSILAGGVYPWVI). Disordered stretches follow at residues 490 to 519 (GAPEGSPHREQDRPAGKEGDGETQYTFTGN), 896 to 923 (KAGDFANNGQTPPPAAGGSTPPATGGTD), and 975 to 1006 (LGSEGASPTPGATTAPTATPSAAATPSPSPSN). Residues 495–509 (SPHREQDRPAGKEGD) show a composition bias toward basic and acidic residues. Low complexity-rich tracts occupy residues 911 to 923 (AGGSTPPATGGTD) and 979 to 1000 (GASPTPGATTAPTATPSAAATP).

It belongs to the UPF0182 family.

Its subcellular location is the cell membrane. The sequence is that of UPF0182 protein Arth_2749 from Arthrobacter sp. (strain FB24).